The chain runs to 62 residues: Large ribosomal subunit protein uL30 (62 aa).

Belongs to the universal ribosomal protein uL30 family. In terms of assembly, part of the 50S ribosomal subunit.

The protein is Large ribosomal subunit protein uL30 of Heliobacterium modesticaldum (strain ATCC 51547 / Ice1).